The chain runs to 386 residues: Demethylsterigmatocystin 6-O-methyltransferase (386 aa).

137 to 150 provides a ligand contact to substrate; sequence FDISGPCTQILPDF. A substrate binding region spans residues 177 to 197; it reads MFEWMPQHPKHMESLGHLMAL. Residues 228–229, Asp253, 273–274, and Arg289 contribute to the S-adenosyl-L-methionine site; these read GG and NF. Residue His293 is the Proton acceptor of the active site.

This sequence belongs to the class I-like SAM-binding methyltransferase superfamily. Cation-independent O-methyltransferase family. COMT subfamily.

It catalyses the reaction 6-demethylsterigmatocystin + S-adenosyl-L-methionine = sterigmatocystin + S-adenosyl-L-homocysteine + H(+). The protein operates within mycotoxin biosynthesis; aflatoxin biosynthesis. Its function is as follows. Demethylsterigmatocystin 6-O-methyltransferase; part of the gene cluster that mediates the biosynthesis of aflatoxins, a group of polyketide-derived furanocoumarins, and part of the most toxic and carcinogenic compounds among the known mycotoxins. The four major aflatoxins produced by A.parasiticus are aflatoxin B1 (AFB1), aflatoxin B2 (AFB2), aflatoxin G1 (AFG1) and aflatoxin G2 (AFG2). Within the aflatoxin pathway, the methyltransferase aflO then catalyzes the modification of demethylsterigmatocystin (DMST) to sterigmatocystin (ST), and of dihydrodemethylsterigmatocystin (DMDHST) to dihydrosterigmatocystin (DHST). The biosynthesis of aflatoxins begins with the norsolorinic acid synthase aflC that combines a hexanoyl starter unit produced by the fatty acid synthase aflA/aflB and 7 malonyl-CoA extender units to synthesize the precursor NOR. The second step is the conversion of NOR to averantin and requires the norsolorinic acid ketoreductase aflD, which catalyzes the dehydration of norsolorinic acid to form (1'S)-averantin. The norsolorinic acid reductases aflE and aflF may also play a role in the conversion of NOR to AVN. The cytochrome P450 monooxygenase aflG then catalyzes the hydroxylation of AVN to 5'hydroxyaverantin (HAVN). The next step is performed by the 5'-hydroxyaverantin dehydrogenase aflH that transforms HAVN to 5'-oxoaverantin (OAVN) which is further converted to averufin (AVF) by aflK that plays a dual role in the pathway, as a 5'-oxoaverantin cyclase that mediates conversion of 5'-oxoaverantin, as well as a versicolorin B synthase in a later step in the pathway. The averufin oxidase aflI catalyzes the conversion of AVF to versiconal hemiacetal acetate (VHA). VHA is then the substrate for the versiconal hemiacetal acetate esterase aflJ to yield versiconal (VAL). Versicolorin B synthase aflK then converts VAL to versicolorin B (VERB) by closing the bisfuran ring of aflatoxin which is required for DNA-binding, thus giving to aflatoxin its activity as a mutagen. Then, the activity of the versicolorin B desaturase aflL leads to versicolorin A (VERA). A branch point starts from VERB since it can also be converted to dihydrodemethylsterigmatocystin (DMDHST), probably also by aflL, VERA being a precursor for aflatoxins B1 and G1, and DMDHST for aflatoxins B2 and G2. Next, the versicolorin reductase aflM and the cytochrome P450 monooxygenase aflN are involved in conversion of VERA to demethylsterigmatocystin (DMST). AflX and aflY seem also involved in this step, through probable aflX-mediated epoxide ring-opening step following versicolorin A oxidation and aflY-mediated Baeyer-Villiger oxidation required for the formation of the xanthone ring. The methyltransferase aflO then leads to the modification of DMST to sterigmatocystin (ST), and of DMDHST to dihydrosterigmatocystin (DHST). Both ST and DHST are then substrates of the O-methyltransferase aflP to yield O-methylsterigmatocystin (OMST) and dihydro-O-methylsterigmatocystin (DHOMST), respectively. Finally OMST is converted to aflatoxins B1 and G1, and DHOMST to aflatoxins B2 and G2, via the action of several enzymes including O-methylsterigmatocystin oxidoreductase aflQ, the cytochrome P450 monooxygenase aflU, but also the NADH-dependent flavin oxidoreductase nadA which is specifically required for the synthesis of AFG1. This is Demethylsterigmatocystin 6-O-methyltransferase from Aspergillus parasiticus (strain ATCC 56775 / NRRL 5862 / SRRC 143 / SU-1).